A 199-amino-acid chain; its full sequence is uncharacterized protein (199 aa).

6 helical membrane passes run 1–21, 28–48, 51–71, 83–103, 127–147, and 154–174; these read MEQF…TFIF, IAVS…IALY, LNAA…YLGM, LVAA…WFII, QLVL…FVIQ, and AVGG…LFGI.

Its subcellular location is the cell membrane. This is an uncharacterized protein from Bacillus subtilis (strain 168).